We begin with the raw amino-acid sequence, 493 residues long: Transcript termination protein A18 (493 aa).

The 157-residue stretch at 100–256 (MIESKRPLYI…NSIINIAKLS (157 aa)) folds into the Helicase ATP-binding domain. 113 to 120 (LACGFGKT) contributes to the ATP binding site. The short motif at 206 to 209 (DESH) is the DESH box element.

This sequence belongs to the helicase family. Poxviruses subfamily. Interacts with G2. Might be part of a transcription complex composed at least of G2, A18, and H5.

The protein resides in the virion. Its function is as follows. DNA helicase which seems to act as a postreplicative transcription termination factor. Involved in ATP-dependent release of nascent RNA. Forms a stable complex with single-stranded DNA, and to a lesser extent RNA. This Rabbitpox virus (strain Utrecht) (RPV) protein is Transcript termination protein A18.